We begin with the raw amino-acid sequence, 406 residues long: Peptidyl-alpha-hydroxyglycine alpha-amidating lyase 2 (406 aa).

The signal sequence occupies residues 1–19 (MSRLLFVALLAISLGYVAS). NHL repeat units lie at residues 168-209 (GAIK…FKPF), 218-261 (GKRF…FNAA), 264-308 (LLRT…PKAG), and 358-402 (DPRS…RVWK). 2 disulfides stabilise this stretch: cysteine 231-cysteine 251 and cysteine 293-cysteine 304.

It belongs to the peptidyl-alpha-hydroxyglycine alpha-amidating lyase family. Zn(2+) serves as cofactor. Post-translationally, N-glycosylated. As to expression, only found in a subset of neurons distributed throughout all levels of the central nervous system (CNS). Present in at least some neuroendocrine cells. In adult brains, it is only present in a small handful of cells, the majority of which being distributed in distal parts of the medulla, with a higher expression in the posterior surface of the brain (at protein level).

It is found in the secreted. It catalyses the reaction a [peptide]-C-terminal (2S)-2-hydroxyglycine = a [peptide]-C-terminal amide + glyoxylate. In terms of biological role, peptidyl-alpha-hydroxylglycine alpha-amidating lyase that catalyzes an essential reaction in C-terminal alpha-amidation of peptides. Mediates the dismutation of the unstable peptidyl(2-hydroxyglycine) intermediate to glyoxylate and the corresponding desglycine peptide amide. C-terminal amidation of peptides such as neuropeptides is essential for full biological activity. The sequence is that of Peptidyl-alpha-hydroxyglycine alpha-amidating lyase 2 (Pal2) from Drosophila melanogaster (Fruit fly).